A 192-amino-acid chain; its full sequence is MFKKILFPLVALFMLAGCAKPPTTIEVSPTITLPQQDPSLMGVTVSINGADQRTDQALAKVTRDNQIVTLTASRDLRFLLQEVLEKQMTARGYMVGPNGPVNLQIIVSQLYADVSQGNVRYNIATKADIAIIATAQNGNKMTKNYRASYNVEGAFQASNKNIADAVNSVLTDTIADMSQDTSIHEFIKQNAR.

An N-terminal signal peptide occupies residues 1–17 (MFKKILFPLVALFMLAG). C18 carries the N-palmitoyl cysteine lipid modification. The S-diacylglycerol cysteine moiety is linked to residue C18.

To H.influenzae HI_0162.

The protein resides in the cell membrane. This is an uncharacterized protein from Escherichia coli O6:H1 (strain CFT073 / ATCC 700928 / UPEC).